Here is a 201-residue protein sequence, read N- to C-terminus: Sterile alpha motif domain-containing protein 12 (201 aa).

An SAM domain is found at 77–143; that stretch reads WTQQDVCKWL…LQQVLQLKVR (67 aa).

This is Sterile alpha motif domain-containing protein 12 (SAMD12) from Pongo abelii (Sumatran orangutan).